We begin with the raw amino-acid sequence, 917 residues long: Spermatogenesis-associated protein 31D3 (917 aa).

Residues 29–49 traverse the membrane as a helical segment; it reads FICLSGLGLFILYLFYMVLTL. 3 disordered regions span residues 55 to 80, 152 to 195, and 773 to 797; these read EKNN…KDRK, SVSP…PPPL, and SQET…LRSN. Positions 63–74 are enriched in basic residues; it reads HQGRARRKRKSV. Residues 152–163 are compositionally biased toward low complexity; that stretch reads SVSPLASSASGA. The segment covering 164–177 has biased composition (polar residues); the sequence is ESSFTLASTPSATT. The span at 782–797 shows a compositional bias: basic and acidic residues; the sequence is LLHDPETSSEEDLRSN.

The protein belongs to the SPATA31 family.

It is found in the membrane. Functionally, may play a role in spermatogenesis. This is Spermatogenesis-associated protein 31D3 (SPATA31D3) from Homo sapiens (Human).